Here is a 551-residue protein sequence, read N- to C-terminus: Rqc2 homolog RqcH (551 aa).

It belongs to the NEMF family. Associates with stalled 50S ribosomal subunits, binds to RqcP. Interacts with human fibronectin.

The protein resides in the secreted. It is found in the capsule. The protein localises to the cell surface. Its subcellular location is the cytoplasm. In terms of biological role, key component of the ribosome quality control system (RQC), a ribosome-associated complex that mediates the extraction of incompletely synthesized nascent chains from stalled ribosomes and their subsequent degradation. RqcH recruits Ala-charged tRNA, and with RqcP directs the elongation of stalled nascent chains on 50S ribosomal subunits, leading to non-templated C-terminal alanine extensions (Ala tail). The Ala tail promotes nascent chain degradation. May add between 1 and at least 8 Ala residues. Binds to stalled 50S ribosomal subunits. Plays a significant role in virulence. Recombinant protein binds to immobilized human fibronectin; binding is saturable and competed by heparin. Purified protein inhibits binding of whole cells to fibronectin. The polypeptide is Rqc2 homolog RqcH (Streptococcus pneumoniae serotype 2 (strain D39 / NCTC 7466)).